A 768-amino-acid chain; its full sequence is Phosphoribosylformylglycinamidine synthase subunit PurL (768 aa).

His-48 is an active-site residue. Residues Tyr-51 and Lys-90 each contribute to the ATP site. Glu-92 contacts Mg(2+). Substrate-binding positions include 93–96 (SHNH) and Arg-115. His-94 acts as the Proton acceptor in catalysis. Asp-116 lines the Mg(2+) pocket. A substrate-binding site is contributed by Gln-239. Asp-267 lines the Mg(2+) pocket. 311-313 (ESQ) contacts substrate. Asp-507 and Gly-544 together coordinate ATP. Asn-545 serves as a coordination point for Mg(2+). A substrate-binding site is contributed by Ser-547.

The protein belongs to the FGAMS family. Monomer. Part of the FGAM synthase complex composed of 1 PurL, 1 PurQ and 2 PurS subunits.

The protein resides in the cytoplasm. It carries out the reaction N(2)-formyl-N(1)-(5-phospho-beta-D-ribosyl)glycinamide + L-glutamine + ATP + H2O = 2-formamido-N(1)-(5-O-phospho-beta-D-ribosyl)acetamidine + L-glutamate + ADP + phosphate + H(+). The protein operates within purine metabolism; IMP biosynthesis via de novo pathway; 5-amino-1-(5-phospho-D-ribosyl)imidazole from N(2)-formyl-N(1)-(5-phospho-D-ribosyl)glycinamide: step 1/2. Part of the phosphoribosylformylglycinamidine synthase complex involved in the purines biosynthetic pathway. Catalyzes the ATP-dependent conversion of formylglycinamide ribonucleotide (FGAR) and glutamine to yield formylglycinamidine ribonucleotide (FGAM) and glutamate. The FGAM synthase complex is composed of three subunits. PurQ produces an ammonia molecule by converting glutamine to glutamate. PurL transfers the ammonia molecule to FGAR to form FGAM in an ATP-dependent manner. PurS interacts with PurQ and PurL and is thought to assist in the transfer of the ammonia molecule from PurQ to PurL. This Parasynechococcus marenigrum (strain WH8102) protein is Phosphoribosylformylglycinamidine synthase subunit PurL.